The primary structure comprises 95 residues: Aspartyl/glutamyl-tRNA(Asn/Gln) amidotransferase subunit C (95 aa).

This sequence belongs to the GatC family. Heterotrimer of A, B and C subunits.

The enzyme catalyses L-glutamyl-tRNA(Gln) + L-glutamine + ATP + H2O = L-glutaminyl-tRNA(Gln) + L-glutamate + ADP + phosphate + H(+). It catalyses the reaction L-aspartyl-tRNA(Asn) + L-glutamine + ATP + H2O = L-asparaginyl-tRNA(Asn) + L-glutamate + ADP + phosphate + 2 H(+). Its function is as follows. Allows the formation of correctly charged Asn-tRNA(Asn) or Gln-tRNA(Gln) through the transamidation of misacylated Asp-tRNA(Asn) or Glu-tRNA(Gln) in organisms which lack either or both of asparaginyl-tRNA or glutaminyl-tRNA synthetases. The reaction takes place in the presence of glutamine and ATP through an activated phospho-Asp-tRNA(Asn) or phospho-Glu-tRNA(Gln). The polypeptide is Aspartyl/glutamyl-tRNA(Asn/Gln) amidotransferase subunit C (Roseobacter denitrificans (strain ATCC 33942 / OCh 114) (Erythrobacter sp. (strain OCh 114))).